Reading from the N-terminus, the 531-residue chain is RCC1 and BTB domain-containing protein 1 (531 aa).

RCC1 repeat units follow at residues Asn-40–Thr-91, Asp-93–Ala-145, Gly-147–Asp-198, Asn-199–Asp-250, Gly-252–Thr-302, and Gly-304–Val-356. 2 consecutive BTB domains span residues Ala-370–Pro-437 and Glu-470–Leu-499.

Ubiquitously expressed. In the retina, present in the nerve fiber layer and to a lesser extent in the inner and outer plexiform layers (at protein level).

The protein resides in the nucleus. In terms of biological role, may be involved in cell cycle regulation by chromatin remodeling. This chain is RCC1 and BTB domain-containing protein 1 (RCBTB1), found in Homo sapiens (Human).